Reading from the N-terminus, the 378-residue chain is uncharacterized protein (378 aa).

The Guanylate cyclase domain occupies 208 to 317; sequence GIGFADLSSF…NPVNLAARLV (110 aa).

This sequence belongs to the adenylyl cyclase class-4/guanylyl cyclase family.

This is an uncharacterized protein from Mycobacterium bovis (strain ATCC BAA-935 / AF2122/97).